We begin with the raw amino-acid sequence, 353 residues long: Major outer membrane protein (353 aa).

The signal sequence occupies residues Met-1–Ala-20.

As to quaternary structure, disulfide bond interactions within and between MOMP molecules and other components form high molecular-weight oligomers.

The protein resides in the cell outer membrane. Functionally, structural rigidity of the outer membrane of elementary bodies and porin forming, permitting diffusion of solutes through the intracellular reticulate body membrane. The polypeptide is Major outer membrane protein (ompH) (Pasteurella multocida).